A 1700-amino-acid chain; its full sequence is Leucine-rich repeat-containing protein 37A2 (1700 aa).

Residues 1-35 form the signal peptide; it reads MSSAQCPALVCVMSRLRFWGPWPLLMWQLLWLLVK. Over 36–1582 the chain is Extracellular; that stretch reads EAQPLEWVKD…VPGYGYTDKL (1547 aa). The segment covering 54–65 has biased composition (polar residues); it reads LGPPDSWSSHSS. Disordered regions lie at residues 54–104, 130–156, 169–534, 559–580, 619–642, and 729–752; these read LGPP…ESTE, QQDL…DPAQ, QLST…AQPP, TEVE…KVVP, PEPT…KHPE, and TKPT…PDLG. The stretch at 137 to 160 is one LRR 1 repeat; that stretch reads LSPQERLPVSPKKLKKDPAQRWSL. Composition is skewed to polar residues over residues 169–189 and 223–237; these read QLST…STDT and ETQN…QSSS. LRR repeat units follow at residues 230-253 and 267-290; these read LEDI…LEEE and ESSM…EDQA. Low complexity predominate over residues 238–249; the sequence is LQQEAPAQLPQL. A glycan (N-linked (GlcNAc...) asparagine) is linked at asparagine 296. Positions 307 to 326 are enriched in polar residues; the sequence is TITSEPTNETESSQAQQETP. A compositionally biased stretch (low complexity) spans 358–368; sequence SEQQQPVQPSE. The span at 433 to 446 shows a compositional bias: polar residues; the sequence is LVHQEATTRLSGSG. The segment covering 482 to 493 has biased composition (low complexity); that stretch reads SPEPINNENPSP. A compositionally biased stretch (low complexity) spans 729 to 749; that stretch reads TKPTTEVKPSPTTEETSTQPP. LRR repeat units follow at residues 864-887, 888-911, 912-935, 937-959, 963-987, and 1002-1027; these read NGTF…VWKA, YSWT…SFEG, LLSL…TFEP, PFLK…TFQA, MQFL…LFKL, and LTTL…MACC. Asparagine 1079 carries an N-linked (GlcNAc...) asparagine glycan. The LRR 10 repeat unit spans residues 1124–1146; that stretch reads LPYFSAVNLDVKSLLLPFIKLPT. Basic and acidic residues-rich tracts occupy residues 1182–1191 and 1201–1216; these read VGRQSIRREQ and AEEK…EVEQ. Disordered stretches follow at residues 1182–1227 and 1309–1328; these read VGRQ…EKLA and KTRS…PKVR. The chain crosses the membrane as a helical span at residues 1583–1603; it reads ILALIVTGILTILIILFCLIV. Over 1604 to 1700 the chain is Cytoplasmic; the sequence is ICCHRRSLQE…TEEEESEALP (97 aa). A compositionally biased stretch (basic and acidic residues) spans 1675–1685; sequence NEDKILNRDPG. The tract at residues 1675-1700 is disordered; it reads NEDKILNRDPGDSEAPTEEEESEALP. Acidic residues predominate over residues 1689–1700; the sequence is APTEEEESEALP.

Belongs to the LRRC37A family.

Its subcellular location is the membrane. The protein is Leucine-rich repeat-containing protein 37A2 (LRRC37A2) of Homo sapiens (Human).